We begin with the raw amino-acid sequence, 1309 residues long: Putative receptor-type tyrosine-protein phosphatase mosPTP-1 (1309 aa).

The signal sequence occupies residues 1-36; that stretch reads MNSAPRNAGAARSVDRRGFIAACGLLVLLVVRMLGA. Residues 37–572 are Extracellular-facing; sequence ADATRIFDIE…RQVYDDYNLA (536 aa). Residues Asn-60, Asn-107, Asn-162, Asn-257, Asn-353, Asn-389, Asn-455, Asn-501, and Asn-513 are each glycosylated (N-linked (GlcNAc...) asparagine). Fibronectin type-III domains are found at residues 147–244, 249–347, 350–449, and 450–553; these read PPGR…TLRE, KPVT…DEGV, KPLN…SGPS, and APKV…LQLH. The helical transmembrane segment at 573–593 threads the bilayer; sequence VLGGIVFSCFGLLLIVLSFLL. The Cytoplasmic segment spans residues 594–1309; sequence WKKCFHAAYY…NHLNLDHNQS (716 aa). Tyrosine-protein phosphatase domains are found at residues 656-921 and 944-1196; these read FSKE…LVEA and IDNQ…LSYM. Cys-862 acts as the Phosphocysteine intermediate in catalysis. The interval 1239 to 1269 is disordered; it reads NSGDGGGNGNDGVPTGNGTNGGLPMSGGGTT. Residues 1256–1268 are compositionally biased toward gly residues; it reads GTNGGLPMSGGGT.

It belongs to the protein-tyrosine phosphatase family. Receptor class subfamily. Interacts with C-type lectin mosGCTL-1; the interaction probably mediates the recruitment of West Nile virus particles in complex with C-type lectin mosGCTL-1 to the cell surface. Interacts with C-type lectin mosGCTL-7; the interaction probably mediates the recruitment of Japanese encephalitis virus particles in complex with C-type lectin mosGCTL-7 to the cell surface. As to expression, salivary gland (at protein level). Hemolymph. Low-level expression in midgut.

The protein localises to the cell membrane. The catalysed reaction is O-phospho-L-tyrosyl-[protein] + H2O = L-tyrosyl-[protein] + phosphate. Putative protein tyrosine-protein phosphatase. In terms of biological role, (Microbial infection) Facilitates West Nile virus infection in mosquitoes probably via recruiting West Nile virus particles in complex with C-type lectin mosGCTL-1 to the cell surface. Functionally, (Microbial infection) Facilitates Japanese encephalitis virus infection in mosquitoes probably via recruiting Japanese encephalitis virus particles in complex with C-type lectin mosGCTL-7 to the cell surface. The protein is Putative receptor-type tyrosine-protein phosphatase mosPTP-1 of Aedes aegypti (Yellowfever mosquito).